We begin with the raw amino-acid sequence, 775 residues long: Protein EBS1 (775 aa).

The segment at 550-597 (PDVPLRTCSPPKAKTPPPSTSDYTPAGAKQTKKSKPKRNSRRVQSLSS) is disordered. Over residues 579–590 (QTKKSKPKRNSR) the composition is skewed to basic residues.

This sequence belongs to the EST1 family.

It is found in the nucleus. The protein resides in the chromosome. Its subcellular location is the telomere. Functionally, involved in telomere maintenance. The sequence is that of Protein EBS1 (EBS1) from Eremothecium gossypii (strain ATCC 10895 / CBS 109.51 / FGSC 9923 / NRRL Y-1056) (Yeast).